Reading from the N-terminus, the 713-residue chain is Acetyl-coenzyme A synthetase 1 (713 aa).

The tract at residues 1–39 is disordered; it reads MSPSAVQSSKLEEQSSEIDKLKAKMSQSAATAQQKKEHE. A compositionally biased stretch (basic and acidic residues) spans 10-22; the sequence is KLEEQSSEIDKLK. Residues 248–251 and T367 contribute to the CoA site; that span reads RGGK. ATP is bound by residues 443 to 445, 467 to 472, D559, and R574; these read GEP and DTYWQT. The FACS motif lies at 552–600; it reads PGYYFTGDGAAKDKDGYIWILGRVDDVVNVSGHRLSTAEIEAAIIEDPI. S582 serves as a coordination point for CoA. Residue R585 coordinates ATP. R650 contacts CoA. A Microbody targeting signal motif is present at residues 711–713; sequence VKL.

This sequence belongs to the ATP-dependent AMP-binding enzyme family.

It localises to the microsome. Its subcellular location is the cytoplasm. The protein localises to the mitochondrion. The protein resides in the nucleus. The catalysed reaction is acetate + ATP + CoA = acetyl-CoA + AMP + diphosphate. Functionally, catalyzes the production of acetyl-CoA. Provides the acetyl-CoA source for histone acetylation in the nucleus. 'Aerobic' isozyme of acetyl-coenzyme A synthetase, which supports growth on nonfermentable carbon sources such as glycerol and ethanol. May be required for assimilation of ethanol and acetate. This chain is Acetyl-coenzyme A synthetase 1 (ACS1), found in Saccharomyces cerevisiae (strain ATCC 204508 / S288c) (Baker's yeast).